The chain runs to 277 residues: Phosphatidylglycerol--prolipoprotein diacylglyceryl transferase (277 aa).

3 helical membrane passes run 16–36, 62–82, and 101–121; these read FFQIHWYGLTYLAAFGLFYFL, LLFFGVVGVILGGRLGYVLFY, and GMAFHGGLLGVIVAMALFAHL. Residue Arg145 coordinates a 1,2-diacyl-sn-glycero-3-phospho-(1'-sn-glycerol). 2 helical membrane passes run 214 to 234 and 243 to 263; these read PIWGRVSGLFVGGYGVFRFIA and FLGLLAFNLSMGQWLCVPMIV.

The protein belongs to the Lgt family.

It is found in the cell inner membrane. The enzyme catalyses L-cysteinyl-[prolipoprotein] + a 1,2-diacyl-sn-glycero-3-phospho-(1'-sn-glycerol) = an S-1,2-diacyl-sn-glyceryl-L-cysteinyl-[prolipoprotein] + sn-glycerol 1-phosphate + H(+). It participates in protein modification; lipoprotein biosynthesis (diacylglyceryl transfer). In terms of biological role, catalyzes the transfer of the diacylglyceryl group from phosphatidylglycerol to the sulfhydryl group of the N-terminal cysteine of a prolipoprotein, the first step in the formation of mature lipoproteins. The sequence is that of Phosphatidylglycerol--prolipoprotein diacylglyceryl transferase from Leptothrix cholodnii (strain ATCC 51168 / LMG 8142 / SP-6) (Leptothrix discophora (strain SP-6)).